A 313-amino-acid chain; its full sequence is Methionyl-tRNA formyltransferase (313 aa).

111–114 serves as a coordination point for (6S)-5,6,7,8-tetrahydrofolate; it reads SLLP.

This sequence belongs to the Fmt family.

The enzyme catalyses L-methionyl-tRNA(fMet) + (6R)-10-formyltetrahydrofolate = N-formyl-L-methionyl-tRNA(fMet) + (6S)-5,6,7,8-tetrahydrofolate + H(+). Its function is as follows. Attaches a formyl group to the free amino group of methionyl-tRNA(fMet). The formyl group appears to play a dual role in the initiator identity of N-formylmethionyl-tRNA by promoting its recognition by IF2 and preventing the misappropriation of this tRNA by the elongation apparatus. This Mesoplasma florum (strain ATCC 33453 / NBRC 100688 / NCTC 11704 / L1) (Acholeplasma florum) protein is Methionyl-tRNA formyltransferase.